The sequence spans 242 residues: Carboxy-S-adenosyl-L-methionine synthase (242 aa).

S-adenosyl-L-methionine is bound by residues tyrosine 39, 64–66 (GCS), 89–90 (DN), 117–118 (DI), asparagine 132, and arginine 199.

It belongs to the class I-like SAM-binding methyltransferase superfamily. Cx-SAM synthase family. As to quaternary structure, homodimer.

The catalysed reaction is prephenate + S-adenosyl-L-methionine = carboxy-S-adenosyl-L-methionine + 3-phenylpyruvate + H2O. In terms of biological role, catalyzes the conversion of S-adenosyl-L-methionine (SAM) to carboxy-S-adenosyl-L-methionine (Cx-SAM). This is Carboxy-S-adenosyl-L-methionine synthase from Vibrio atlanticus (strain LGP32) (Vibrio splendidus (strain Mel32)).